The primary structure comprises 199 residues: Protein CPL1 (199 aa).

Residues 1-30 (MFSIPPSVRRLVFLFLIAAPLLSIVLPVAA) form the signal peptide. Residues 34–58 (GVDPPSKLQPRAPQPSRRMGATKRS) form a disordered region. Residue asparagine 148 is glycosylated (N-linked (GlcNAc...) asparagine).

It localises to the secreted. Virulence factor which promotes fungal virulence by enhancing type 2 inflammation in the mouse host. Likely binds mouse Tlr4 independently of Ly96/Md2 and activates Tlr4 signaling to drive Stat3 phosphorylation in interstitial macrophages, which promotes the initial induction of Arg1/arginase-1 and increases macrophage sensitivity to Il4 signaling. This chain is Protein CPL1, found in Cryptococcus neoformans var. grubii serotype A (strain H99 / ATCC 208821 / CBS 10515 / FGSC 9487) (Filobasidiella neoformans var. grubii).